Consider the following 363-residue polypeptide: 3-dehydroquinate synthase (363 aa).

Residues 107 to 111 (GVIGD), 131 to 132 (TT), Lys144, and Lys153 contribute to the NAD(+) site. Residues Glu186, His251, and His268 each contribute to the Zn(2+) site.

This sequence belongs to the sugar phosphate cyclases superfamily. Dehydroquinate synthase family. NAD(+) is required as a cofactor. Requires Co(2+) as cofactor. The cofactor is Zn(2+).

The protein resides in the cytoplasm. The catalysed reaction is 7-phospho-2-dehydro-3-deoxy-D-arabino-heptonate = 3-dehydroquinate + phosphate. It participates in metabolic intermediate biosynthesis; chorismate biosynthesis; chorismate from D-erythrose 4-phosphate and phosphoenolpyruvate: step 2/7. Functionally, catalyzes the conversion of 3-deoxy-D-arabino-heptulosonate 7-phosphate (DAHP) to dehydroquinate (DHQ). This Nostoc sp. (strain PCC 7120 / SAG 25.82 / UTEX 2576) protein is 3-dehydroquinate synthase.